The primary structure comprises 221 residues: UPF0319 protein CGSHiGG_02140 (221 aa).

The first 21 residues, 1–21 (MKLRAVVLGLATLCTSTATFA), serve as a signal peptide directing secretion.

The protein belongs to the UPF0319 family.

The chain is UPF0319 protein CGSHiGG_02140 from Haemophilus influenzae (strain PittGG).